The sequence spans 107 residues: Quaternary ammonium compound-resistance protein QacC (107 aa).

Residues 1–2 (MP) lie on the Cytoplasmic side of the membrane. Residues 3–20 (YIYLIIAISTEVIGSAFL) traverse the membrane as a helical segment. Residues 21–29 (KSSEGFSKF) lie on the Extracellular side of the membrane. Residues 30–47 (IPSLGTIISFGICFYFLS) traverse the membrane as a helical segment. Topologically, residues 48–56 (KTMQHLPLN) are cytoplasmic. A helical transmembrane segment spans residues 57–75 (ITYATWAGLGLVLTTVVSI). Topologically, residues 76 to 85 (IIFKEQINLI) are extracellular. The chain crosses the membrane as a helical span at residues 86-103 (TIVSIVLIIVGVVSLNIF). Residues 104-107 (GTSH) are Cytoplasmic-facing.

Belongs to the drug/metabolite transporter (DMT) superfamily. Small multidrug resistance (SMR) (TC 2.A.7.1) family.

It localises to the cell membrane. Ethidium export is inhibited by N-ethylmaleimide (NEM). Functionally, multidrug exporter. Is implicated for the resistance to bacteriocidal quaternary ammonium compounds and ethidium bromide. This is Quaternary ammonium compound-resistance protein QacC from Staphylococcus aureus.